The primary structure comprises 378 residues: Cobalt-precorrin-5B C(1)-methyltransferase (378 aa).

It belongs to the CbiD family.

It carries out the reaction Co-precorrin-5B + S-adenosyl-L-methionine = Co-precorrin-6A + S-adenosyl-L-homocysteine. The protein operates within cofactor biosynthesis; adenosylcobalamin biosynthesis; cob(II)yrinate a,c-diamide from sirohydrochlorin (anaerobic route): step 6/10. Catalyzes the methylation of C-1 in cobalt-precorrin-5B to form cobalt-precorrin-6A. The chain is Cobalt-precorrin-5B C(1)-methyltransferase from Synechocystis sp. (strain ATCC 27184 / PCC 6803 / Kazusa).